The chain runs to 619 residues: Protein DFG16 (619 aa).

A topological domain (extracellular) is located at residue methionine 1. A helical membrane pass occupies residues isoleucine 2–alanine 22. Over tyrosine 23 to methionine 167 the chain is Cytoplasmic. The disordered stretch occupies residues proline 33–aspartate 54. A compositionally biased stretch (basic and acidic residues) spans lysine 44–aspartate 54. A helical membrane pass occupies residues isoleucine 168–leucine 188. Residues leucine 189 to valine 203 are Extracellular-facing. Residues tyrosine 204–phenylalanine 224 form a helical membrane-spanning segment. At aspartate 225–histidine 291 the chain is on the cytoplasmic side. Residues isoleucine 292–leucine 312 form a helical membrane-spanning segment. Topologically, residues tryptophan 313–lysine 321 are extracellular. The helical transmembrane segment at valine 322–phenylalanine 342 threads the bilayer. The Cytoplasmic segment spans residues threonine 343–threonine 378. Residues isoleucine 379–phenylalanine 399 form a helical membrane-spanning segment. Residues alanine 400–threonine 410 are Extracellular-facing. A helical transmembrane segment spans residues phenylalanine 411–valine 431. Residues leucine 432–aspartate 619 lie on the Cytoplasmic side of the membrane. Composition is skewed to polar residues over residues lysine 485–tryptophan 504 and lysine 526–lysine 549. Disordered regions lie at residues lysine 485–serine 506 and isoleucine 520–histidine 586. Positions glutamine 552–threonine 561 are enriched in basic residues.

The protein localises to the membrane. In terms of biological role, involved in invasion during filamentous growth. This Saccharomyces cerevisiae (strain ATCC 204508 / S288c) (Baker's yeast) protein is Protein DFG16 (DFG16).